We begin with the raw amino-acid sequence, 211 residues long: Methylthioribulose-1-phosphate dehydratase (211 aa).

The Zn(2+) site is built by His-94 and His-96.

The protein belongs to the aldolase class II family. MtnB subfamily. It depends on Zn(2+) as a cofactor.

It catalyses the reaction 5-(methylsulfanyl)-D-ribulose 1-phosphate = 5-methylsulfanyl-2,3-dioxopentyl phosphate + H2O. Its pathway is amino-acid biosynthesis; L-methionine biosynthesis via salvage pathway; L-methionine from S-methyl-5-thio-alpha-D-ribose 1-phosphate: step 2/6. Catalyzes the dehydration of methylthioribulose-1-phosphate (MTRu-1-P) into 2,3-diketo-5-methylthiopentyl-1-phosphate (DK-MTP-1-P). This chain is Methylthioribulose-1-phosphate dehydratase, found in Pseudoalteromonas translucida (strain TAC 125).